Reading from the N-terminus, the 210-residue chain is LexA repressor (210 aa).

The H-T-H motif DNA-binding region spans 31-51 (RVEISKELGFRSPNAAEEHLK). Catalysis depends on for autocatalytic cleavage activity residues serine 126 and lysine 163.

This sequence belongs to the peptidase S24 family. Homodimer.

The catalysed reaction is Hydrolysis of Ala-|-Gly bond in repressor LexA.. In terms of biological role, represses a number of genes involved in the response to DNA damage (SOS response), including recA and lexA. In the presence of single-stranded DNA, RecA interacts with LexA causing an autocatalytic cleavage which disrupts the DNA-binding part of LexA, leading to derepression of the SOS regulon and eventually DNA repair. This Histophilus somni (strain 129Pt) (Haemophilus somnus) protein is LexA repressor.